We begin with the raw amino-acid sequence, 192 residues long: Ion-translocating oxidoreductase complex subunit A (192 aa).

6 consecutive transmembrane segments (helical) span residues 5 to 25 (LLLLIGTVLVNNFVLVKFLGL), 39 to 59 (IGMSMATTFVLTLASILSYLV), 65 to 85 (LPFDLGYLRTMSFILVIAVVV), 102 to 122 (ALGIYLPLITTNCAVLGVALL), 134 to 154 (AIFGFGAAVGFSLVLILFSAM), and 171 to 191 (AIAMVTAGLMSLAFMGFTGLV).

This sequence belongs to the NqrDE/RnfAE family. The complex is composed of six subunits: RnfA, RnfB, RnfC, RnfD, RnfE and RnfG.

The protein localises to the cell inner membrane. In terms of biological role, part of a membrane-bound complex that couples electron transfer with translocation of ions across the membrane. The sequence is that of Ion-translocating oxidoreductase complex subunit A from Shewanella pealeana (strain ATCC 700345 / ANG-SQ1).